We begin with the raw amino-acid sequence, 332 residues long: Transaldolase (332 aa).

The active-site Schiff-base intermediate with substrate is lysine 136.

It belongs to the transaldolase family. Type 1 subfamily.

The protein resides in the cytoplasm. The catalysed reaction is D-sedoheptulose 7-phosphate + D-glyceraldehyde 3-phosphate = D-erythrose 4-phosphate + beta-D-fructose 6-phosphate. The protein operates within carbohydrate degradation; pentose phosphate pathway; D-glyceraldehyde 3-phosphate and beta-D-fructose 6-phosphate from D-ribose 5-phosphate and D-xylulose 5-phosphate (non-oxidative stage): step 2/3. Transaldolase is important for the balance of metabolites in the pentose-phosphate pathway. This Trichormus variabilis (strain ATCC 29413 / PCC 7937) (Anabaena variabilis) protein is Transaldolase.